We begin with the raw amino-acid sequence, 336 residues long: DNA-directed RNA polymerase subunit alpha (336 aa).

An alpha N-terminal domain (alpha-NTD) region spans residues 1–232 (MIQKNWQELI…DQLGLFVNFE (232 aa)). The segment at 248-336 (FNPALLKKVD…ELAKRYEDQY (89 aa)) is alpha C-terminal domain (alpha-CTD).

The protein belongs to the RNA polymerase alpha chain family. Homodimer. The RNAP catalytic core consists of 2 alpha, 1 beta, 1 beta' and 1 omega subunit. When a sigma factor is associated with the core the holoenzyme is formed, which can initiate transcription.

The catalysed reaction is RNA(n) + a ribonucleoside 5'-triphosphate = RNA(n+1) + diphosphate. In terms of biological role, DNA-dependent RNA polymerase catalyzes the transcription of DNA into RNA using the four ribonucleoside triphosphates as substrates. This is DNA-directed RNA polymerase subunit alpha from Chelativorans sp. (strain BNC1).